Reading from the N-terminus, the 302-residue chain is Sulfate adenylyltransferase subunit 2 (302 aa).

The protein belongs to the PAPS reductase family. CysD subfamily. In terms of assembly, heterodimer composed of CysD, the smaller subunit, and CysN.

It catalyses the reaction sulfate + ATP + H(+) = adenosine 5'-phosphosulfate + diphosphate. The protein operates within sulfur metabolism; hydrogen sulfide biosynthesis; sulfite from sulfate: step 1/3. Functionally, with CysN forms the ATP sulfurylase (ATPS) that catalyzes the adenylation of sulfate producing adenosine 5'-phosphosulfate (APS) and diphosphate, the first enzymatic step in sulfur assimilation pathway. APS synthesis involves the formation of a high-energy phosphoric-sulfuric acid anhydride bond driven by GTP hydrolysis by CysN coupled to ATP hydrolysis by CysD. This is Sulfate adenylyltransferase subunit 2 from Zymomonas mobilis subsp. mobilis (strain ATCC 31821 / ZM4 / CP4).